The chain runs to 125 residues: Glycine cleavage system H protein (125 aa).

One can recognise a Lipoyl-binding domain in the interval 23 to 105; it reads VSTVGITEHA…FEGGWLFKVR (83 aa). An N6-lipoyllysine modification is found at Lys64.

Belongs to the GcvH family. As to quaternary structure, the glycine cleavage system is composed of four proteins: P, T, L and H. It depends on (R)-lipoate as a cofactor.

In terms of biological role, the glycine cleavage system catalyzes the degradation of glycine. The H protein shuttles the methylamine group of glycine from the P protein to the T protein. The sequence is that of Glycine cleavage system H protein from Streptomyces coelicolor (strain ATCC BAA-471 / A3(2) / M145).